The sequence spans 492 residues: Probable cobyric acid synthase (492 aa).

The 193-residue stretch at 252–444 folds into the GATase cobBQ-type domain; it reads PIEVNIVKFS…FHGILENFEF (193 aa). The Nucleophile role is filled by Cys-330. His-436 is a catalytic residue.

It belongs to the CobB/CobQ family. CobQ subfamily.

It functions in the pathway cofactor biosynthesis; adenosylcobalamin biosynthesis. Functionally, catalyzes amidations at positions B, D, E, and G on adenosylcobyrinic A,C-diamide. NH(2) groups are provided by glutamine, and one molecule of ATP is hydrogenolyzed for each amidation. The chain is Probable cobyric acid synthase from Methanococcus maripaludis (strain C5 / ATCC BAA-1333).